Here is a 389-residue protein sequence, read N- to C-terminus: Cytochrome b (389 aa).

4 consecutive transmembrane segments (helical) span residues 36–56 (MGSL…FLAM), 80–102 (WLIR…THIA), 117–137 (VWTV…LGYC), and 183–203 (FFAF…MHMM). The heme b site is built by His86 and His100. Positions 187 and 201 each coordinate heme b. Position 206 (His206) interacts with a ubiquinone. 4 helical membrane passes run 229-249 (FVFK…LFVF), 293-313 (LLGV…PITD), 325-345 (LSKF…IIGM), and 352-372 (FVLI…IIVP).

The protein belongs to the cytochrome b family. In terms of assembly, fungal cytochrome b-c1 complex contains 10 subunits; 3 respiratory subunits, 2 core proteins and 5 low-molecular weight proteins. Cytochrome b-c1 complex is a homodimer. Heme b serves as cofactor.

Its subcellular location is the mitochondrion inner membrane. Functionally, component of the ubiquinol-cytochrome c reductase complex (complex III or cytochrome b-c1 complex) that is part of the mitochondrial respiratory chain. The b-c1 complex mediates electron transfer from ubiquinol to cytochrome c. Contributes to the generation of a proton gradient across the mitochondrial membrane that is then used for ATP synthesis. The chain is Cytochrome b (COB) from Vanderwaltozyma polyspora (strain ATCC 22028 / DSM 70294 / BCRC 21397 / CBS 2163 / NBRC 10782 / NRRL Y-8283 / UCD 57-17) (Kluyveromyces polysporus).